The primary structure comprises 374 residues: NADH-quinone oxidoreductase subunit D 1 (374 aa).

It belongs to the complex I 49 kDa subunit family. In terms of assembly, NDH-1 is composed of 14 different subunits. Subunits NuoB, C, D, E, F, and G constitute the peripheral sector of the complex.

Its subcellular location is the cell membrane. It catalyses the reaction a quinone + NADH + 5 H(+)(in) = a quinol + NAD(+) + 4 H(+)(out). NDH-1 shuttles electrons from NADH, via FMN and iron-sulfur (Fe-S) centers, to quinones in the respiratory chain. The immediate electron acceptor for the enzyme in this species is believed to be ubiquinone. Couples the redox reaction to proton translocation (for every two electrons transferred, four hydrogen ions are translocated across the cytoplasmic membrane), and thus conserves the redox energy in a proton gradient. The chain is NADH-quinone oxidoreductase subunit D 1 from Roseiflexus sp. (strain RS-1).